We begin with the raw amino-acid sequence, 267 residues long: L-aspartate dehydrogenase (267 aa).

Residues A124 and N190 each contribute to the NAD(+) site. H220 is an active-site residue.

The protein belongs to the L-aspartate dehydrogenase family.

It carries out the reaction L-aspartate + NADP(+) + H2O = oxaloacetate + NH4(+) + NADPH + H(+). The catalysed reaction is L-aspartate + NAD(+) + H2O = oxaloacetate + NH4(+) + NADH + H(+). The protein operates within cofactor biosynthesis; NAD(+) biosynthesis; iminoaspartate from L-aspartate (dehydrogenase route): step 1/1. Functionally, specifically catalyzes the NAD or NADP-dependent dehydrogenation of L-aspartate to iminoaspartate. The protein is L-aspartate dehydrogenase of Polaromonas sp. (strain JS666 / ATCC BAA-500).